The primary structure comprises 284 residues: MKLGDFEIGLDRPFFLIAGTCVVESEQMTIDTAGRLKEICAKLNIPFIYKSSYDKANRSSGKSFRGLGMDEGLRILSEVKRQLGLPVLTDVHAEHEIEQVASVVDVLQTPAFLCRQTDFIHACARSGKPVNIKKGQFLAPHDMKNVIDKARDAAREAGLSEDRFMACERGVSFGYNNLVSDMRSLAIMRETNAPVVFDATHSVQLPGGQGTSSGGQREFVPVLARAAVAVGVAGLFMETHPNPAQAKSDGPNAVPLHRMADLLETLVTLDRAVKRAPFLESDFN.

This sequence belongs to the KdsA family.

Its subcellular location is the cytoplasm. The catalysed reaction is D-arabinose 5-phosphate + phosphoenolpyruvate + H2O = 3-deoxy-alpha-D-manno-2-octulosonate-8-phosphate + phosphate. Its pathway is carbohydrate biosynthesis; 3-deoxy-D-manno-octulosonate biosynthesis; 3-deoxy-D-manno-octulosonate from D-ribulose 5-phosphate: step 2/3. It functions in the pathway bacterial outer membrane biogenesis; lipopolysaccharide biosynthesis. This chain is 2-dehydro-3-deoxyphosphooctonate aldolase, found in Paraburkholderia xenovorans (strain LB400).